We begin with the raw amino-acid sequence, 185 residues long: Neuronal vesicle trafficking-associated protein 1 (185 aa).

At 1–82 (MVKLGNNFAE…ITEGVTERFK (82 aa)) the chain is on the cytoplasmic side. A helical; Signal-anchor for type II membrane protein transmembrane segment spans residues 83-103 (VSVLVLFALAFLTCVVFLVVY). Topologically, residues 104–185 (KVYKYDRACP…QETEAAEKSA (82 aa)) are lumenal. The segment at 129–164 (ESYYAEQDSSAREKFYTVINHYNLAKQSITRSVSPW) is required for GRIP1 interaction.

The protein belongs to the NSG family. In terms of assembly, forms a complex with GRIP1, GRIA2 and STX12 through direct interaction with GRIP1; controls the intracellular fate of AMPAR and the endosomal sorting of the GRIA2 subunit toward recycling and membrane targeting. Interacts with STX12. Interacts with APP; could regulate APP processing. Interacts with FAM171A1.

The protein localises to the membrane. Its subcellular location is the golgi apparatus. It is found in the trans-Golgi network membrane. It localises to the endosome membrane. The protein resides in the cell projection. The protein localises to the dendrite. Its subcellular location is the early endosome membrane. It is found in the late endosome membrane. It localises to the lysosome lumen. The protein resides in the recycling endosome membrane. The protein localises to the cytoplasmic vesicle membrane. Its subcellular location is the golgi stack membrane. It is found in the endosome. It localises to the multivesicular body membrane. The protein resides in the endoplasmic reticulum membrane. Plays a role in the recycling mechanism in neurons of multiple receptors, including AMPAR, APP and L1CAM and acts at the level of early endosomes to promote sorting of receptors toward a recycling pathway. Regulates sorting and recycling of GRIA2 through interaction with GRIP1 and then contributes to the regulation of synaptic transmission and plasticity by affecting the recycling and targeting of AMPA receptors to the synapse. Is required for faithful sorting of L1CAM to axons by facilitating trafficking from somatodendritic early endosome or the recycling endosome. In an other hand, induces apoptosis via the activation of CASP3 in response to DNA damage. The protein is Neuronal vesicle trafficking-associated protein 1 of Macaca fascicularis (Crab-eating macaque).